Consider the following 358-residue polypeptide: Nicotinate-nucleotide--dimethylbenzimidazole phosphoribosyltransferase (358 aa).

The Proton acceptor role is filled by Glu323.

The protein belongs to the CobT family.

The catalysed reaction is 5,6-dimethylbenzimidazole + nicotinate beta-D-ribonucleotide = alpha-ribazole 5'-phosphate + nicotinate + H(+). The protein operates within nucleoside biosynthesis; alpha-ribazole biosynthesis; alpha-ribazole from 5,6-dimethylbenzimidazole: step 1/2. Its function is as follows. Catalyzes the synthesis of alpha-ribazole-5'-phosphate from nicotinate mononucleotide (NAMN) and 5,6-dimethylbenzimidazole (DMB). This Oleidesulfovibrio alaskensis (strain ATCC BAA-1058 / DSM 17464 / G20) (Desulfovibrio alaskensis) protein is Nicotinate-nucleotide--dimethylbenzimidazole phosphoribosyltransferase.